The following is a 152-amino-acid chain: Small ribosomal subunit protein bS6 (152 aa).

A disordered region spans residues 96 to 152 (HEEGPSAMLQKRDRDDRGPREGGDRGPRREFGDRPPRRDGDFQRGPRPDRAPREDRA).

The protein belongs to the bacterial ribosomal protein bS6 family.

Its function is as follows. Binds together with bS18 to 16S ribosomal RNA. This chain is Small ribosomal subunit protein bS6, found in Rhizobium etli (strain CIAT 652).